The sequence spans 61 residues: Large ribosomal subunit protein bL32 (61 aa).

Belongs to the bacterial ribosomal protein bL32 family.

The chain is Large ribosomal subunit protein bL32 from Ehrlichia canis (strain Jake).